Here is a 420-residue protein sequence, read N- to C-terminus: Phosphoribosylamine--glycine ligase (420 aa).

The ATP-grasp domain occupies 108–314 (KQIMVKYGIP…FAQNIDDILH (207 aa)). 134-195 (IEEQGAPIVV…EEFLAGEEFS (62 aa)) provides a ligand contact to ATP. Residues Glu284 and Asn286 each coordinate Mg(2+).

It belongs to the GARS family. The cofactor is Mg(2+). Mn(2+) serves as cofactor.

It carries out the reaction 5-phospho-beta-D-ribosylamine + glycine + ATP = N(1)-(5-phospho-beta-D-ribosyl)glycinamide + ADP + phosphate + H(+). It participates in purine metabolism; IMP biosynthesis via de novo pathway; N(1)-(5-phospho-D-ribosyl)glycinamide from 5-phospho-alpha-D-ribose 1-diphosphate: step 2/2. The polypeptide is Phosphoribosylamine--glycine ligase (Streptococcus suis).